Reading from the N-terminus, the 285-residue chain is Inositol oxygenase (285 aa).

Arg-29 provides a ligand contact to substrate. At Ser-33 the chain carries Phosphoserine. Substrate is bound at residue 85–88 (DESD). Residues His-98, His-123, and Asp-124 each contribute to the Fe cation site. Residues Lys-127 and 141–142 (GD) each bind substrate. 3 residues coordinate Fe cation: His-194, His-220, and Asp-253. 220 to 221 (HS) contributes to the substrate binding site.

The protein belongs to the myo-inositol oxygenase family. Fe cation serves as cofactor. As to expression, kidney specific. Renal proximal tubules.

It localises to the cytoplasm. The catalysed reaction is myo-inositol + O2 = D-glucuronate + H2O + H(+). The protein operates within polyol metabolism; myo-inositol degradation into D-glucuronate; D-glucuronate from myo-inositol: step 1/1. The chain is Inositol oxygenase (Miox) from Mus musculus (Mouse).